We begin with the raw amino-acid sequence, 325 residues long: MSWLTPEIIDVLIAVLKAVVILVVVVVCGALMSFGERRLLGLFQNRYGPNRVGWGGSLQIVADMIKMFFKEDWVPRFADRMIFTLAPVIGFVSLLLAFAIVPITPTWMAADLNIGILFFMMMAGLAVYAVLFAGWSSNNKYSLLGAMRASAQTLSYEVFIGLSFMGVVAQADSFNMVDIVNAQEHMWNVIPQFFGFLTFAIAGVAVCHRHPFDQPEAEQELADGYHIEYSGMKFGLFFVGEYIGIVTVSALIVTMFFGGWHGPFLPPFVWFALKTAFFMVMFILIRASLPRPRYDQVMAFGWKICLPLTLLNLLATAAVILYNAQ.

8 helical membrane-spanning segments follow: residues 11-31, 81-101, 114-134, 149-169, 186-206, 237-257, 265-285, and 304-324; these read VLIA…CGAL, MIFT…FAIV, IGIL…LFAG, ASAQ…GVVA, MWNV…GVAV, FFVG…TMFF, LPPF…FILI, and ICLP…LYNA.

The protein belongs to the complex I subunit 1 family. NDH-1 is composed of 13 different subunits. Subunits NuoA, H, J, K, L, M, N constitute the membrane sector of the complex.

The protein localises to the cell inner membrane. It catalyses the reaction a quinone + NADH + 5 H(+)(in) = a quinol + NAD(+) + 4 H(+)(out). In terms of biological role, NDH-1 shuttles electrons from NADH, via FMN and iron-sulfur (Fe-S) centers, to quinones in the respiratory chain. The immediate electron acceptor for the enzyme in this species is believed to be ubiquinone. Couples the redox reaction to proton translocation (for every two electrons transferred, four hydrogen ions are translocated across the cytoplasmic membrane), and thus conserves the redox energy in a proton gradient. This subunit may bind ubiquinone. This Photorhabdus laumondii subsp. laumondii (strain DSM 15139 / CIP 105565 / TT01) (Photorhabdus luminescens subsp. laumondii) protein is NADH-quinone oxidoreductase subunit H.